The primary structure comprises 520 residues: U3 small nucleolar RNA-associated protein 15 homolog (520 aa).

WD repeat units follow at residues 36–75 (KEFG…PIKT), 78–117 (RFKD…PLRQ), 120–159 (GHTK…EIVS), 162–202 (EHSD…SVMT), 204–242 (EHGH…QLLV), 246–285 (NHHK…VVHS), and 287–326 (NYAT…SKEK).

As to quaternary structure, part of the small subunit (SSU) processome, composed of more than 70 proteins and the RNA chaperone small nucleolar RNA (snoRNA) U3. May be a component of the proposed t-UTP subcomplex of the ribosomal small subunit (SSU) processome.

It is found in the nucleus. The protein localises to the nucleolus. Functionally, ribosome biogenesis factor. Involved in nucleolar processing of pre-18S ribosomal RNA. Required for optimal pre-ribosomal RNA transcription by RNA polymerase I. Part of the small subunit (SSU) processome, first precursor of the small eukaryotic ribosomal subunit. During the assembly of the SSU processome in the nucleolus, many ribosome biogenesis factors, an RNA chaperone and ribosomal proteins associate with the nascent pre-rRNA and work in concert to generate RNA folding, modifications, rearrangements and cleavage as well as targeted degradation of pre-ribosomal RNA by the RNA exosome. This is U3 small nucleolar RNA-associated protein 15 homolog (UTP15) from Gallus gallus (Chicken).